Reading from the N-terminus, the 248-residue chain is Myelin protein P0 (248 aa).

Residues 1–29 form the signal peptide; it reads MAPGAPSSSPSPILAALLFSSLVLSPTLA. The Ig-like V-type domain maps to 30–143; the sequence is IVVYTDREVY…DIVGKTSQVT (114 aa). Residues 30–153 lie on the Extracellular side of the membrane; it reads IVVYTDREVY…LYVFEKVPTR (124 aa). A disulfide bond links cysteine 50 and cysteine 127. Asparagine 122 is a glycosylation site (N-linked (GlcNAc...) (complex) asparagine). The helical transmembrane segment at 154-179 threads the bilayer; it reads YGVVLGAVIGGILGVVLLLLLLFYLI. At 180–248 the chain is on the cytoplasmic side; that stretch reads RYCWLRRQAA…GLGESRKDKK (69 aa). Serine 210 is modified (phosphoserine; by PKC). Residues 222–248 form a disordered region; that stretch reads MLDHSRSTKAASEKKSKGLGESRKDKK. The span at 224 to 248 shows a compositional bias: basic and acidic residues; that stretch reads DHSRSTKAASEKKSKGLGESRKDKK. Serine 226 and serine 228 each carry phosphoserine. Residue serine 233 is modified to Phosphoserine; by PKC. Residue serine 237 is modified to Phosphoserine. Serine 243 carries the post-translational modification Phosphoserine; by PKC.

It belongs to the myelin P0 protein family. As to quaternary structure, homodimer and homotetramer. In terms of processing, N-glycosylated; contains sulfate-substituted glycan. In terms of tissue distribution, found only in peripheral nervous system Schwann cells.

It is found in the cell membrane. Its function is as follows. Is an adhesion molecule necessary for normal myelination in the peripheral nervous system. It mediates adhesion between adjacent myelin wraps and ultimately drives myelin compaction. The polypeptide is Myelin protein P0 (Mpz) (Rattus norvegicus (Rat)).